The following is a 348-amino-acid chain: Centromere protein N-B (348 aa).

It belongs to the CENP-N/CHL4 family.

The protein resides in the nucleus. Its subcellular location is the chromosome. The protein localises to the centromere. In terms of biological role, probable component of a centromeric complex involved in assembly of kinetochore proteins, mitotic progression and chromosome segregation. This chain is Centromere protein N-B (cenpn-b), found in Xenopus laevis (African clawed frog).